We begin with the raw amino-acid sequence, 468 residues long: Argininosuccinate lyase (468 aa).

Belongs to the lyase 1 family. Argininosuccinate lyase subfamily.

Its subcellular location is the cytoplasm. The catalysed reaction is 2-(N(omega)-L-arginino)succinate = fumarate + L-arginine. It participates in amino-acid biosynthesis; L-arginine biosynthesis; L-arginine from L-ornithine and carbamoyl phosphate: step 3/3. This Sphingopyxis alaskensis (strain DSM 13593 / LMG 18877 / RB2256) (Sphingomonas alaskensis) protein is Argininosuccinate lyase.